We begin with the raw amino-acid sequence, 834 residues long: MRHQNKNHKQRPSFLSQFLVILWFRTKLSIRDKKFFILGILLPMISIGASIILNNVLVFGPGSDFQKTNNNLNNNNIFITPKTLNSQQETLINTMKLQYSLNYTYLDDDTDLPNYIENKSLSSLDYGISFIGSNGINIYYNSSIESIPSFVHSFFISLFKINGINLQLNETITVLSSEVTFDAFYLLMPMILQYGFVFFIPYFAILIVTDRDKGFKNHLILNSLRTSVYWFGNLVFDYLIFLIPTIIGWILLYSFKIDGIYSDNSGKSFLLFLTFGISAIPFGFVLQFIFDKEETANKWLYPFTSIVTSIPSALISVAFPTSTPLIVELLLSILPTFSFCNGLKALTYNNSSTVSYTILIQLLSGLIYLILIYFIDNYKKPKKNEIINDEDSESIINNQIIEDNDVLNEKEKIKRLVRDGGGNNNNNKKNNSYPKIVVDGIYKQFIQPKPTLDKPSIIERCSGGTKATKKNSIIKKAVDGIWFSVEKNEIFGLLGPNGSGKSTCLNLLTGLLKADQGDGYLSGKSIDKDKDVFQSIGSCAQNDILFENLTIYEHLYLFSRLKSITTTKSELEDEIDFYINKFSIQSFKNKKSSDLSGGTKRKLSVACCLIGDPQVVLLDEPSTSLDPISRNELHSLIDELKVNKSIIMTTHSINEINQCCNRVAIMVDGKIRCIGTPNHLKHKYGSGYTIDIIPNNYLNNSYEIHNFMAQTFPNATRVERLGRFISYDLPSQNQQSLSTIFRILQSNKQRLQILDFSASSSSLEKVFLKFANLQEEINKQQTNNKSNIINNNNNNNNNNNNNNNNNNNNNNNNNNNNNNNNNTNNNTNNNQLIN.

A run of 7 helical transmembrane segments spans residues 35 to 55 (FFILGILLPMISIGASIILNN), 188 to 208 (MPMILQYGFVFFIPYFAILIV), 235 to 255 (VFDYLIFLIPTIIGWILLYSF), 269 to 289 (FLLFLTFGISAIPFGFVLQFI), 297 to 319 (NKWLYPFTSIVTSIPSALISVAF), 324 to 346 (PLIVELLLSILPTFSFCNGLKAL), and 355 to 375 (SYTILIQLLSGLIYLILIYFI). In terms of domain architecture, ABC transporter spans 452–693 (LDKPSIIERC…YGSGYTIDII (242 aa)). 495 to 502 (GPNGSGKS) is an ATP binding site. A compositionally biased stretch (polar residues) spans 779-789 (KQQTNNKSNII). The disordered stretch occupies residues 779-834 (KQQTNNKSNIINNNNNNNNNNNNNNNNNNNNNNNNNNNNNNNNNTNNNTNNNQLIN). Over residues 790–834 (NNNNNNNNNNNNNNNNNNNNNNNNNNNNNNNNNTNNNTNNNQLIN) the composition is skewed to low complexity.

This sequence belongs to the ABC transporter superfamily. ABCA family.

The protein localises to the membrane. The sequence is that of ABC transporter A family member 11 (abcA11) from Dictyostelium discoideum (Social amoeba).